The chain runs to 38 residues: Photosystem II reaction center protein L (38 aa).

Residues 17 to 37 (SLFWGLLLIFILAVLFSSYFF) traverse the membrane as a helical segment.

The protein belongs to the PsbL family. As to quaternary structure, PSII is composed of 1 copy each of membrane proteins PsbA, PsbB, PsbC, PsbD, PsbE, PsbF, PsbH, PsbI, PsbJ, PsbK, PsbL, PsbM, PsbT, PsbX, PsbY, PsbZ, Psb30/Ycf12, at least 3 peripheral proteins of the oxygen-evolving complex and a large number of cofactors. It forms dimeric complexes.

Its subcellular location is the plastid. The protein localises to the chloroplast thylakoid membrane. Its function is as follows. One of the components of the core complex of photosystem II (PSII). PSII is a light-driven water:plastoquinone oxidoreductase that uses light energy to abstract electrons from H(2)O, generating O(2) and a proton gradient subsequently used for ATP formation. It consists of a core antenna complex that captures photons, and an electron transfer chain that converts photonic excitation into a charge separation. This subunit is found at the monomer-monomer interface and is required for correct PSII assembly and/or dimerization. This Guillardia theta (Cryptophyte) protein is Photosystem II reaction center protein L.